The primary structure comprises 501 residues: ADP,ATP carrier protein 3 (501 aa).

Transmembrane regions (helical) follow at residues 23-43 (LKLF…FGAL), 59-79 (IISF…TVLY), 90-110 (YIFY…AYII), 146-166 (YALM…LMFW), 183-203 (PVLG…LVFF), 227-247 (IMLQ…MLLF), 293-313 (IALL…PWKA), 326-346 (VNFM…FMII), 361-381 (LLTP…IIFI), 387-407 (CFGD…QNIL), 446-466 (FGKS…PTAT), and 470-490 (IIIY…WNVI).

Belongs to the ADP/ATP translocase tlc family.

It is found in the cell membrane. Its function is as follows. Provides the rickettsial cell with host ATP in exchange for rickettsial ADP. This is an obligate exchange system. This energy acquiring activity is an important component of rickettsial parasitism. The chain is ADP,ATP carrier protein 3 (tlcC) from Rickettsia conorii (strain ATCC VR-613 / Malish 7).